The primary structure comprises 77 residues: Acyl carrier protein (77 aa).

Residues 1-76 (MATFDDVKAV…DVVNYIDNLK (76 aa)) form the Carrier domain. Residue S36 is modified to O-(pantetheine 4'-phosphoryl)serine.

This sequence belongs to the acyl carrier protein (ACP) family. In terms of processing, 4'-phosphopantetheine is transferred from CoA to a specific serine of apo-ACP by AcpS. This modification is essential for activity because fatty acids are bound in thioester linkage to the sulfhydryl of the prosthetic group.

It is found in the cytoplasm. The protein operates within lipid metabolism; fatty acid biosynthesis. Functionally, carrier of the growing fatty acid chain in fatty acid biosynthesis. The protein is Acyl carrier protein of Campylobacter jejuni subsp. doylei (strain ATCC BAA-1458 / RM4099 / 269.97).